Reading from the N-terminus, the 459-residue chain is Ribulose bisphosphate carboxylase (459 aa).

Asn-111 serves as a coordination point for substrate. Lys-166 acts as the Proton acceptor in catalysis. Lys-168 contributes to the substrate binding site. Positions 191, 193, and 194 each coordinate Mg(2+). Lys-191 carries the N6-carboxylysine modification. His-287 acts as the Proton acceptor in catalysis. The substrate site is built by Arg-288, His-321, and Ser-368.

The protein belongs to the RuBisCO large chain family. Type II subfamily. In terms of assembly, homodimer. Mg(2+) serves as cofactor.

It carries out the reaction 2 (2R)-3-phosphoglycerate + 2 H(+) = D-ribulose 1,5-bisphosphate + CO2 + H2O. It catalyses the reaction D-ribulose 1,5-bisphosphate + O2 = 2-phosphoglycolate + (2R)-3-phosphoglycerate + 2 H(+). Functionally, ruBisCO catalyzes two reactions: the carboxylation of D-ribulose 1,5-bisphosphate, the primary event in carbon dioxide fixation, as well as the oxidative fragmentation of the pentose substrate. Both reactions occur simultaneously and in competition at the same active site. In Paramagnetospirillum magnetotacticum (Aquaspirillum magnetotacticum), this protein is Ribulose bisphosphate carboxylase.